We begin with the raw amino-acid sequence, 226 residues long: Ribosomal RNA small subunit methyltransferase G (226 aa).

S-adenosyl-L-methionine-binding positions include glycine 86, leucine 91, 137-138, and arginine 150; that span reads VE.

The protein belongs to the methyltransferase superfamily. RNA methyltransferase RsmG family.

The protein resides in the cytoplasm. It carries out the reaction guanosine(527) in 16S rRNA + S-adenosyl-L-methionine = N(7)-methylguanosine(527) in 16S rRNA + S-adenosyl-L-homocysteine. Specifically methylates the N7 position of guanine in position 527 of 16S rRNA. In Polaromonas sp. (strain JS666 / ATCC BAA-500), this protein is Ribosomal RNA small subunit methyltransferase G.